The sequence spans 350 residues: Methionine import ATP-binding protein MetN (350 aa).

Residues 9–245 (LKDVDVEFHG…PQQQLTKDFI (237 aa)) enclose the ABC transporter domain. 43–50 (GYSGAGKS) is an ATP binding site.

It belongs to the ABC transporter superfamily. Methionine importer (TC 3.A.1.24) family. The complex is composed of two ATP-binding proteins (MetN), two transmembrane proteins (MetI) and a solute-binding protein (MetQ).

The protein resides in the cell membrane. The catalysed reaction is L-methionine(out) + ATP + H2O = L-methionine(in) + ADP + phosphate + H(+). It carries out the reaction D-methionine(out) + ATP + H2O = D-methionine(in) + ADP + phosphate + H(+). Part of the ABC transporter complex MetNIQ involved in methionine import. Responsible for energy coupling to the transport system. This chain is Methionine import ATP-binding protein MetN, found in Lacticaseibacillus paracasei (strain ATCC 334 / BCRC 17002 / CCUG 31169 / CIP 107868 / KCTC 3260 / NRRL B-441) (Lactobacillus paracasei).